Reading from the N-terminus, the 433-residue chain is 3-phosphoshikimate 1-carboxyvinyltransferase (433 aa).

3 residues coordinate 3-phosphoshikimate: K22, S23, and R27. K22 provides a ligand contact to phosphoenolpyruvate. 2 residues coordinate phosphoenolpyruvate: G95 and R123. 3-phosphoshikimate is bound by residues S167, Q169, D315, and K342. Residue Q169 participates in phosphoenolpyruvate binding. D315 (proton acceptor) is an active-site residue. Residues R346 and R387 each coordinate phosphoenolpyruvate.

This sequence belongs to the EPSP synthase family. Monomer.

The protein localises to the cytoplasm. It catalyses the reaction 3-phosphoshikimate + phosphoenolpyruvate = 5-O-(1-carboxyvinyl)-3-phosphoshikimate + phosphate. It functions in the pathway metabolic intermediate biosynthesis; chorismate biosynthesis; chorismate from D-erythrose 4-phosphate and phosphoenolpyruvate: step 6/7. Catalyzes the transfer of the enolpyruvyl moiety of phosphoenolpyruvate (PEP) to the 5-hydroxyl of shikimate-3-phosphate (S3P) to produce enolpyruvyl shikimate-3-phosphate and inorganic phosphate. The chain is 3-phosphoshikimate 1-carboxyvinyltransferase from Legionella pneumophila (strain Corby).